The sequence spans 520 residues: Bifunctional purine biosynthesis protein PurH (520 aa).

In terms of domain architecture, MGS-like spans 1–150 (MSDDRKAIKR…KNHPSVAVVV (150 aa)).

The protein belongs to the PurH family.

The enzyme catalyses (6R)-10-formyltetrahydrofolate + 5-amino-1-(5-phospho-beta-D-ribosyl)imidazole-4-carboxamide = 5-formamido-1-(5-phospho-D-ribosyl)imidazole-4-carboxamide + (6S)-5,6,7,8-tetrahydrofolate. The catalysed reaction is IMP + H2O = 5-formamido-1-(5-phospho-D-ribosyl)imidazole-4-carboxamide. Its pathway is purine metabolism; IMP biosynthesis via de novo pathway; 5-formamido-1-(5-phospho-D-ribosyl)imidazole-4-carboxamide from 5-amino-1-(5-phospho-D-ribosyl)imidazole-4-carboxamide (10-formyl THF route): step 1/1. It functions in the pathway purine metabolism; IMP biosynthesis via de novo pathway; IMP from 5-formamido-1-(5-phospho-D-ribosyl)imidazole-4-carboxamide: step 1/1. This chain is Bifunctional purine biosynthesis protein PurH, found in Corynebacterium glutamicum (strain R).